A 300-amino-acid polypeptide reads, in one-letter code: MTMFKTTFRQTATIAVSLISLLVSPMLWANTNNTIEEQLSTLEKYSQGRLGVALINTEDNSQITYRGEERFAMASTSKVMAVAAVLKESEKQAGLLDKNITIKKSDLVAYSPITEKHLVTGMSLAQLSAATLQYSDNTAMNKILDYLGGPAKVTQFARSINDVTYRLDRKEPELNTAIHGDPRDTTSPIAMAKSLQALTLGDALGQSQRQQLVTWLKGNTTGDHSIKAGLPKHWIVGDKTGSGDYGTTNDIAVIWPKNHAPLILVVYFTQQEQDAKYRKDIIVKATEIVTKEISNSPQTK.

An N-terminal signal peptide occupies residues 1–29 (MTMFKTTFRQTATIAVSLISLLVSPMLWA). Catalysis depends on serine 75, which acts as the Acyl-ester intermediate. Substrate is bound at residue 239-241 (KTG).

This sequence belongs to the class-A beta-lactamase family. As to quaternary structure, monomer.

The enzyme catalyses a beta-lactam + H2O = a substituted beta-amino acid. Functionally, hydrolyzes broad-spectrum beta-lactam antibiotics. Active against cephalosporins such as cefuroxime and cefotaxime. The protein is Beta-lactamase (blaB) of Proteus vulgaris.